A 295-amino-acid chain; its full sequence is MLVVLLTAALLVLSSAQGVDEEVVYEDSSQQLELEQQSQGHGQHHPKPPPGGLPPRPPASDENGDGDDNDDGDDDGSGDDVNRPERPPQHGGNHHHPHHPPPAAGPQRPPQPGSPQGPPPPGGPQQRPPQGPPPQGGPQRPPQPGSPQGPPPPGGPQQRPPQGPPPQGGPQRPPQPGSPQGPPPPGGPQQRAPQGPPPQGGPQRPPQPGSPQGPPPPGGPQQRPPQGPPPQGGPQRPPQPGSPQGPPPPGGPQQRPPQGPPPQGGPQRPPQPGNPQGPPQQGGQQQSSFLWSFSA.

The N-terminal stretch at 1 to 16 (MLVVLLTAALLVLSSA) is a signal peptide. A disordered region spans residues 16 to 295 (AQGVDEEVVY…QSSFLWSFSA (280 aa)). A compositionally biased stretch (low complexity) spans 26–41 (EDSSQQLELEQQSQGH). Pro residues predominate over residues 48 to 58 (PPPGGLPPRPP). Positions 62–78 (ENGDGDDNDDGDDDGSG) are enriched in acidic residues. Pro residues-rich tracts occupy residues 100 to 187 (PPPA…PPGG) and 194 to 278 (QGPP…PQGP).

Post-translationally, contains glycosaminoglycans of chondroitin-sulfate and heparan types.

It is found in the secreted. This chain is Proline-rich proteoglycan 2 (Prpg2), found in Rattus norvegicus (Rat).